Consider the following 155-residue polypeptide: Endoribonuclease YbeY (155 aa).

Residues histidine 120, histidine 124, and histidine 130 each coordinate Zn(2+).

Belongs to the endoribonuclease YbeY family. Zn(2+) serves as cofactor.

The protein resides in the cytoplasm. Single strand-specific metallo-endoribonuclease involved in late-stage 70S ribosome quality control and in maturation of the 3' terminus of the 16S rRNA. The protein is Endoribonuclease YbeY of Staphylococcus aureus (strain bovine RF122 / ET3-1).